Here is a 593-residue protein sequence, read N- to C-terminus: MKKVALISLCIFTALSAFADSPNTATASINLEQEKQNWELAQHQDYLKRLKQREVFLQVEGLLKSAVKKQQFSEATQNITKTLIDSLQGYPLQYDLLARFWETKIAFLQNDDIQGRQQAINELNALVQQNYPFVTPAFQALLQKLSTLNEQQTSATSDNAKENNRVQKEQNQVENPKQLAEIVRKSDPNTLDKTVLIDAFPRYLKTLPEQMNNLSFESYQKWANTWQLSEDEIKQWKIAFLNRFFDNENTDFQKWRDEQIRQLQTDNLTERRLRMAIWQKTELTSWLNLLSAESKSKQEWRYWEAKQDILKNTKKLTALSKERGFYPMLAATQLKQAYQLNVPIAPSFTQAEQLPFKQVFAMITELRELGRNGLAKQRWRILLDNVDFTTQLKLSEYAKNQQWFELAVDASIVAKAWDYLSLRLPNAYSEYFNAALQNLNISKTFAMAIARQESAWNPMAQSSANARGLMQLLPSTAKLTAENNQLPYQGEQDLFKPLNNILLGTAHLNELNGKYPNNRILIAAAYNAGANRVGKWLSRASGKLALDEFVASIPFYETRGYVQNVVAYDFYYQILQNKENPQIFSQEELNRLY.

Residues 1-19 (MKKVALISLCIFTALSAFA) form the signal peptide. Residues 152 to 176 (QTSATSDNAKENNRVQKEQNQVENP) form a disordered region. A compositionally biased stretch (basic and acidic residues) spans 159 to 168 (NAKENNRVQK). Residues 440–529 (NISKTFAMAI…ILIAAAYNAG (90 aa)) are slt-type domain. E453 is an active-site residue.

It belongs to the transglycosylase Slt family.

It is found in the periplasm. It carries out the reaction Exolytic cleavage of the (1-&gt;4)-beta-glycosidic linkage between N-acetylmuramic acid (MurNAc) and N-acetylglucosamine (GlcNAc) residues in peptidoglycan, from either the reducing or the non-reducing ends of the peptidoglycan chains, with concomitant formation of a 1,6-anhydrobond in the MurNAc residue.. Murein-degrading enzyme. May play a role in recycling of muropeptides during cell elongation and/or cell division. In Haemophilus influenzae (strain ATCC 51907 / DSM 11121 / KW20 / Rd), this protein is Putative soluble lytic murein transglycosylase (slt).